The sequence spans 364 residues: D-alanine--D-alanine ligase (364 aa).

The ATP-grasp domain occupies 145–354 (KMAFEQAGLP…FPELVDKLVQ (210 aa)). 181-236 (EASLGYPCFVKPANLGSSVGISKVRSRQELEDALDNAANYDRRIIIEAGVAAREVE) is a binding site for ATP. The Mg(2+) site is built by aspartate 307, glutamate 321, and asparagine 323.

It belongs to the D-alanine--D-alanine ligase family. Mg(2+) serves as cofactor. It depends on Mn(2+) as a cofactor.

Its subcellular location is the cytoplasm. The enzyme catalyses 2 D-alanine + ATP = D-alanyl-D-alanine + ADP + phosphate + H(+). It functions in the pathway cell wall biogenesis; peptidoglycan biosynthesis. In terms of biological role, cell wall formation. This chain is D-alanine--D-alanine ligase, found in Nostoc sp. (strain PCC 7120 / SAG 25.82 / UTEX 2576).